Here is a 1192-residue protein sequence, read N- to C-terminus: METFEISDFKEHAKKKSMWAGALNKVTISGLMGVFTEDEDLMALPIHRDHCPALLKIFDELIVNATDHERACHNKTKKVTYIKISFDKGVFSCENDGPGIPIVKHEQASLIAKRDVYVPEVASCYFLAGTNINKAKDCIKGGTNGVGLKLAMVHSQWAILTTADGAQKYVQHINQRLDNIEPPTITPSREMFTRIELMPVYQELGYAQPLSETEQADLSAWIYLRACQCAAYVGKGTTIYYNDKPCSTSSVMALAKMYTLVTAPNSTIYTTTIKADAKPYSLHPLQVAAVVSPKFKKFEHVSIINGVNCVKGEHVTFLKKAINEMVVKKFQQTVKDKNRKTTLRDSCSNIFVVIVGSIPGIEWTGQRKDELSIAENVFKTHYSIPSSFLTSMTRSIVDILLQSISKKDNHKQIDVDKYTRARNAGGKKAQDCMLLAAEGDSALSLLRAGLTLGKSNPSGPSFDFCGMISLGGVIMNACKKVTNITTDSGETIMVRNEQLTNNKVLQGIVQVLGLDFNCHYKTQEERAKLRYGCIVACVDQDLDGCGKILGLLLAYFHLFWPQLIVHGFVKRLLTPLIRVYEKGNTVPVEFYYEQEFDAWAKKQTSLANHTVKYYKGLAAHDTHEVKSMFKHFDKMVYTFTLDDSAKELFHIYFGGESELRKRELCTGVVPLTETQTQSIHSVRRIPCSLHLQVDTKAYKLDAIERQIPNFLDGMTRARRKILAGGLKCFASNNRERKVFQFGGYVADHMFYHHGDMSLNTSIIKAAQYYPGSSHLYPVFIGIGSFGSRHLGGKDAGSPRYISVQLASEFIKTMFPAEDSWLLPYVFEDGQRAEPEYYVPVLPLAIMEYGANPSEGWKYTTWARQLEDILALVRAYIDKNNPKHELLHYAIDHKITVLPLRPSNYNFKGHLKRFGQYYYSYGTYVVSEQRNMITITELPLRVPTVAYIESIKKSSNRMAFIEEIVDYSSSETIEILVKLKPNSLSRIIEEFKETEEQNSIENFLRLRNCLHSHLNFVKPKGGIIEFNSYYEILYAWLPYRRDLYQKRLMRERAVLKLRIIMETAIVRYINESADLNLSHYEDEKEAGRILSEHGFPPLNQSLITSPEFATIEELNQKALQGCYTYILSLQARELLIAAKTRRVEKIKKMQARLDKVEQLLQESPFPGASVWLEEIDAVEKAIIKGRNTQWKFH.

Residues Asn64, Asn95, and 142-149 (GTNGVGLK) contribute to the ATP site. Glu438, Asp539, and Asp541 together coordinate Mg(2+). Residues 707-1174 (IPNFLDGMTR…PGASVWLEEI (468 aa)) form the Topo IIA-type catalytic domain. Tyr800 acts as the O-(5'-phospho-DNA)-tyrosine intermediate in catalysis.

This sequence belongs to the type II topoisomerase family. Mg(2+) is required as a cofactor. The cofactor is Mn(2+). It depends on Ca(2+) as a cofactor.

It localises to the host cytoplasm. The enzyme catalyses ATP-dependent breakage, passage and rejoining of double-stranded DNA.. Its function is as follows. Type II topoisomerase. Processively relaxes supercoiled DNA. Displays DNA-supercoiling activity only when associated with the viral histone-like protein. The sequence is that of DNA topoisomerase 2 from African swine fever virus (isolate Pig/Kenya/KEN-50/1950) (ASFV).